Here is a 119-residue protein sequence, read N- to C-terminus: Small ribosomal subunit protein uS10 (119 aa).

Position 2 is an N-acetylalanine (A2). K4 participates in a covalent cross-link: Glycyl lysine isopeptide (Lys-Gly) (interchain with G-Cter in ubiquitin). The residue at position 8 (K8) is an N6-succinyllysine; alternate. K8 participates in a covalent cross-link: Glycyl lysine isopeptide (Lys-Gly) (interchain with G-Cter in ubiquitin); alternate. Position 9 is a phosphothreonine (T9). N6-acetyllysine occurs at positions 34 and 75. Phosphoserine is present on S93.

Belongs to the universal ribosomal protein uS10 family. As to quaternary structure, component of the 40S small ribosomal subunit. In terms of processing, polyubiquitinated by ZNF598 via 'Lys-63'-linked ubiquitin chains when a ribosome has stalled, initiating the ribosome quality control (RQC) pathway to degrade the potentially detrimental aberrant nascent polypeptide. Deubiquitinated by OTUD3 and USP21, antagonizing ZNF598 activity. Ufmylated by UFL1.

It localises to the cytoplasm. Its function is as follows. Component of the small ribosomal subunit. The ribosome is a large ribonucleoprotein complex responsible for the synthesis of proteins in the cell. This is Small ribosomal subunit protein uS10 (RPS20) from Pongo abelii (Sumatran orangutan).